The chain runs to 701 residues: Elongation factor G (701 aa).

The region spanning 8–290 (SLYRNIGISA…AVVELLPAPT (283 aa)) is the tr-type G domain. GTP-binding positions include 17-24 (AHIDAGKT), 88-92 (DTPGH), and 142-145 (NKMD).

The protein belongs to the TRAFAC class translation factor GTPase superfamily. Classic translation factor GTPase family. EF-G/EF-2 subfamily.

It is found in the cytoplasm. Its function is as follows. Catalyzes the GTP-dependent ribosomal translocation step during translation elongation. During this step, the ribosome changes from the pre-translocational (PRE) to the post-translocational (POST) state as the newly formed A-site-bound peptidyl-tRNA and P-site-bound deacylated tRNA move to the P and E sites, respectively. Catalyzes the coordinated movement of the two tRNA molecules, the mRNA and conformational changes in the ribosome. The chain is Elongation factor G from Neisseria gonorrhoeae (strain ATCC 700825 / FA 1090).